Reading from the N-terminus, the 422-residue chain is MPSSEHSFISVPHDALRSVRSFLAFFSKSFNRDQVLLSAGSLAFQTLLSIVPLMAVILSVLSVSPVFDSFKQYVEEFIFQNFLPASGVEVQEYLWQFISKTSSVPTIGGLSLFIIALFLISTIDHTLNRIWGVDAPRKFFQGFTLYWTVLTLGPIFIGSSLVATSYVWYNFFTQGALADVQAKTLLLLPVMNTFLAFFLLYILVPNRKVKFVHAFSGAILATLLFEFSKRWFAFYVSHVATFEHIYGALSVIPLLFFWIYLIWVVALSGAEFVYCLGVVHPERAVVREFHPLLGISAVLLVIERISAAQSSGGFLTMNTLEDLCRSVTRMQLRRITDFLLQQNIIHKTEEGSFALSADLHTLTLYDLYAILPADLVQPKDPETSDSHFGQDLSGLEQNIIQCLQHAMHQPLAAFLNTATRTL.

Transmembrane regions (helical) follow at residues 47–67 (LLSIVPLMAVILSVLSVSPVF), 103–123 (SVPTIGGLSLFIIALFLISTI), 143–163 (FTLYWTVLTLGPIFIGSSLVA), 185–205 (LLLLPVMNTFLAFFLLYILVP), 208–228 (KVKFVHAFSGAILATLLFEFS), and 247–267 (GALSVIPLLFFWIYLIWVVAL).

This sequence belongs to the UPF0761 family.

Its subcellular location is the cell inner membrane. This Prosthecochloris aestuarii (strain DSM 271 / SK 413) protein is UPF0761 membrane protein Paes_1471.